The following is a 500-amino-acid chain: Protein FAM83F (500 aa).

Residue Ala2 is modified to N-acetylalanine. The segment at 2–300 (AESQLNCLDE…LYAISEEVDL (299 aa)) is DUF1669. Phosphoserine is present on Ser4. 3 disordered regions span residues 82 to 109 (NARGKSKAKAKAPAPAPAESGESLAYWP), 347 to 366 (QQREAGGNPEGQEEGASGGE), and 391 to 500 (IPLG…CVIS). Over residues 397-419 (SQKDGRMVSHMHRDLKPKSREAP) the composition is skewed to basic and acidic residues. 2 stretches are compositionally biased toward low complexity: residues 425–442 (GEAARGEAAPARRFSSRL) and 458–468 (SSVSTETSEVE). Polar residues predominate over residues 477-500 (ENSSADISGKTSPSSAKPSNCVIS). Ser479 is modified (phosphoserine).

Belongs to the FAM83 family. As to quaternary structure, directly interacts (via DUF1669) with CSNK1A1 and CSNK1A1L.

The protein resides in the cell membrane. The polypeptide is Protein FAM83F (FAM83F) (Homo sapiens (Human)).